We begin with the raw amino-acid sequence, 1450 residues long: Sister chromatid cohesion protein PDS5 homolog (1450 aa).

3 disordered regions span residues 1–145, 680–707, and 1340–1450; these read MATR…KETK, VGGS…QQQQ, and LPPL…EVEN. The segment covering 45-59 has biased composition (acidic residues); sequence DDGELDSDIDEEDES. Residues 77 to 138 show a composition bias toward low complexity; sequence KTQQQPQKSI…TSSSSQQSTQ (62 aa). Residues 650 to 716 are a coiled coil; the sequence is KQLFKKYLEE…QLQQPENDIE (67 aa). Over residues 682 to 691 the composition is skewed to polar residues; that stretch reads GSTTPTSKKS. 2 stretches are compositionally biased toward low complexity: residues 692-707 and 1350-1363; these read QPPQ…QQQQ and NNNN…STNN. A compositionally biased stretch (basic and acidic residues) spans 1369–1378; sequence DENNNNKNDN. Residues 1387 to 1401 are compositionally biased toward low complexity; the sequence is NSTTAVPQKSIISKP. A compositionally biased stretch (basic residues) spans 1402-1427; sequence PAKKVSKKAAAKQKSPKKKTNKKKKQ. The span at 1430 to 1450 shows a compositional bias: acidic residues; it reads SEEEVSSSEEEDESQDEEVEN.

Belongs to the PDS5 family.

It is found in the nucleus. Functionally, may regulate sister chromatid cohesion during mitosis and couple it to DNA replication. This is Sister chromatid cohesion protein PDS5 homolog from Dictyostelium discoideum (Social amoeba).